The chain runs to 689 residues: MTQQTFLVEIGTEELPPKALRSLAQAFADNFRTELDNAGLAHGDIEWFAAPRRLALKVAALNAAQPDREIEKRGPAIAQAFDAEGKPTKAAEGWARGCGISVDQAERLSTDKGEWLLYRALQKGQRAQDLLPALVASALSRLPIPKLMRWGDSDTQFVRPVHTVTLLLGSESIPATILGVPSDRVIRGHRFMGEAEFTLDSADQYPQILLERGKVIADYDARKALIKRDAEAAAARIGGVADLSDSLLEEVTSLVEWPVVLTARFEEKFLAVPAEALVYTMKGDQKYFPVYDAAGKLLPNFIFVANIDSKDAQQIIAGNEKVVRPRLADAEFFFKTDRKQRLEDNLPRLESVLFQQQLGSLRDKTDRITALAGWIAQQIGADVNMATRAGLLSKCDLMTNMVFEFTDTQGVMGMHYARHDGEAEEVAVALNEQYMPRFAGDALPTSLVACAVAIADKMDTLAGIFGIGQHPKGDKDPFALRRAALGVLRIVVEKKLPLDLLTLTQEAVRLYGDKLGNASVVDDVVEFMLGRFRAWYQEEGHAVDTIQAVLARRPTRPADFDARVRAVSHFRTLPEAATLAAANKRVSNILAKSGDVLAEQVQAVLLKEPAEIRLAANLITLQEKLAPLFADGRYQEALVELATLRQPVDDFFEQVMVMADDEQVRINRLTLLNKLRDLFLQVADISVLQ.

The protein belongs to the class-II aminoacyl-tRNA synthetase family. Tetramer of two alpha and two beta subunits.

The protein resides in the cytoplasm. The catalysed reaction is tRNA(Gly) + glycine + ATP = glycyl-tRNA(Gly) + AMP + diphosphate. The chain is Glycine--tRNA ligase beta subunit from Edwardsiella ictaluri (strain 93-146).